Here is a 469-residue protein sequence, read N- to C-terminus: Ubiquitin carboxyl-terminal hydrolase MINDY-1 (469 aa).

The disordered stretch occupies residues 1 to 85 (MEHHQPEDPA…APPGPTLGTL (85 aa)). Residues 34–53 (HPQDTDARDADGEAGEREPA) are compositionally biased toward basic and acidic residues. S103 bears the Phosphoserine mark. C137 (nucleophile) is an active-site residue. Residue H319 is the Proton acceptor of the active site. The ubiquitin-binding domain (UBD) stretch occupies residues 388–426 (QVDQDYLIALSLQQQQPRGTLGLTDLELAQQLQQEEYQQ). A disordered region spans residues 428 to 469 (QAAQPVWMRTRALSPQGRGATSGRPAGERRQRPKHESDCILL). S441 is modified (phosphoserine). Basic and acidic residues predominate over residues 453–469 (AGERRQRPKHESDCILL).

It belongs to the MINDY deubiquitinase family. FAM63 subfamily.

It catalyses the reaction Thiol-dependent hydrolysis of ester, thioester, amide, peptide and isopeptide bonds formed by the C-terminal Gly of ubiquitin (a 76-residue protein attached to proteins as an intracellular targeting signal).. In terms of biological role, hydrolase that can specifically remove 'Lys-48'-linked conjugated ubiquitin from proteins. Has exodeubiquitinase activity and has a preference for long polyubiquitin chains. May play a regulatory role at the level of protein turnover. This Pongo abelii (Sumatran orangutan) protein is Ubiquitin carboxyl-terminal hydrolase MINDY-1 (MINDY1).